Reading from the N-terminus, the 102-residue chain is Small ribosomal subunit protein uS10 (102 aa).

This sequence belongs to the universal ribosomal protein uS10 family. Part of the 30S ribosomal subunit.

Its function is as follows. Involved in the binding of tRNA to the ribosomes. This chain is Small ribosomal subunit protein uS10, found in Clostridium beijerinckii (strain ATCC 51743 / NCIMB 8052) (Clostridium acetobutylicum).